Here is a 493-residue protein sequence, read N- to C-terminus: MFQVQTELANHGAVIVALFEEETSRFVQELDKAFEGQLQGLLDEKELSTKKKSISKVHSLGKTNVKRYYFVGLGKKEAYTTETLRASLSKTFKTLQAEKIQDAAILLDSFVTEKLDAIDVAHIAAEVYCLGTYRLQTYKTDKKEHVELEKLVVITAEDAKEIEAALTVGYVHGRATNSARTLVNMPPNMLTATKLAEYAVELAEKYDMDYKVLEKEEMEELGMGALLAVNQGSTEPPKMIALIYKGKEEWKDVIGLIGKGITYDTGGYSLKPRDGMVGMKGDMGGAAAVLGAMEIIGELRPEQNVIAIIPSTDNVVSGTAFKPDDVITSMSGKTIEVLNTDAEGRLALADGITYAKKLGANYLVDVATLTGGVIVALGNHTTGAMTNNETLFEQVLEASMETDERIWQLPIFERDKERVRNSKFADLNNSPGRDGHAVMAGTFLGEFAEDTPWVHLDIAGTSDTTSTHDLGPAGATGVMVRTLATLVERFGEE.

Mn(2+) is bound by residues K259 and D264. K271 is an active-site residue. Positions 282, 341, and 343 each coordinate Mn(2+). R345 is a catalytic residue.

This sequence belongs to the peptidase M17 family. Mn(2+) serves as cofactor.

Its subcellular location is the cytoplasm. It carries out the reaction Release of an N-terminal amino acid, Xaa-|-Yaa-, in which Xaa is preferably Leu, but may be other amino acids including Pro although not Arg or Lys, and Yaa may be Pro. Amino acid amides and methyl esters are also readily hydrolyzed, but rates on arylamides are exceedingly low.. The enzyme catalyses Release of an N-terminal amino acid, preferentially leucine, but not glutamic or aspartic acids.. In terms of biological role, presumably involved in the processing and regular turnover of intracellular proteins. Catalyzes the removal of unsubstituted N-terminal amino acids from various peptides. In Bacillus cytotoxicus (strain DSM 22905 / CIP 110041 / 391-98 / NVH 391-98), this protein is Probable cytosol aminopeptidase.